The primary structure comprises 1997 residues: Protein MOR1 (1997 aa).

HEAT repeat units follow at residues 48-86 (DARL…AADA) and 164-202 (VVPP…WIGK). Residues 236–264 (RKIRSEQEKELEEEVVPEAAGTNNSEEAV) form a disordered region. HEAT repeat units lie at residues 321–359 (PGDF…GLRT), 362–400 (SGNS…SGCI), and 441–479 (LKLH…MVGM). The segment at 501-576 (IGSASDTTSG…DGGPQSKASA (76 aa)) is disordered. Positions 504–520 (ASDTTSGTVAASNTGVG) are enriched in polar residues. Low complexity predominate over residues 529 to 539 (SSSMRRSAASM). HEAT repeat units lie at residues 848 to 886 (EDIS…EAHK), 890 to 928 (PTGT…AMGP), 931 to 969 (EKSS…AAQL), and 1007 to 1045 (PSEA…ICGQ). The disordered stretch occupies residues 1087-1115 (MSLPSKAGSKNNKHGPNDRGSNVSKAVSQ). 4 HEAT repeats span residues 1233 to 1259 (TTCL…MLTE), 1260 to 1294 (AEAA…MVNI), 1295 to 1332 (YSLP…HHGT), and 1334 to 1372 (VSGL…NLGD). Over residues 1400–1410 (MDKRREGRPGD) the composition is skewed to basic and acidic residues. The disordered stretch occupies residues 1400-1436 (MDKRREGRPGDARAALRRSVRENGSDIAEQSGEAVSR). One copy of the HEAT 14 repeat lies at 1539–1579 (RSCKYVLNTLMQTFQIKRLAHAVKEGTLDNLITELLLWLLD). Residues 1755–1776 (MGQTHWGDAGSNNPNPSTHSTD) form a disordered region. Residues 1764-1776 (GSNNPNPSTHSTD) are compositionally biased toward polar residues.

Belongs to the TOG/XMAP215 family.

It localises to the cytoplasm. The protein localises to the cytoskeleton. Its function is as follows. Microtubule-associated protein that is essential for cortical microtubules organization and function. This is Protein MOR1 (MOR1) from Oryza sativa subsp. japonica (Rice).